Here is a 337-residue protein sequence, read N- to C-terminus: Ketol-acid reductoisomerase (NADP(+)) (337 aa).

The KARI N-terminal Rossmann domain occupies 3–183 (VEMFYDDDAD…GGTRAGVIKT (181 aa)). NADP(+) is bound by residues 26 to 29 (YGSQ), Lys-49, Ser-52, Ser-54, and 84 to 87 (DTAQ). Residue His-109 is part of the active site. Position 135 (Gly-135) interacts with NADP(+). Positions 184–329 (TFKEETETDL…KKLRDLMSWV (146 aa)) constitute a KARI C-terminal knotted domain. Asp-192, Glu-196, Glu-228, and Glu-232 together coordinate Mg(2+). Residue Ser-253 coordinates substrate.

This sequence belongs to the ketol-acid reductoisomerase family. Mg(2+) is required as a cofactor.

The enzyme catalyses (2R)-2,3-dihydroxy-3-methylbutanoate + NADP(+) = (2S)-2-acetolactate + NADPH + H(+). The catalysed reaction is (2R,3R)-2,3-dihydroxy-3-methylpentanoate + NADP(+) = (S)-2-ethyl-2-hydroxy-3-oxobutanoate + NADPH + H(+). It participates in amino-acid biosynthesis; L-isoleucine biosynthesis; L-isoleucine from 2-oxobutanoate: step 2/4. The protein operates within amino-acid biosynthesis; L-valine biosynthesis; L-valine from pyruvate: step 2/4. In terms of biological role, involved in the biosynthesis of branched-chain amino acids (BCAA). Catalyzes an alkyl-migration followed by a ketol-acid reduction of (S)-2-acetolactate (S2AL) to yield (R)-2,3-dihydroxy-isovalerate. In the isomerase reaction, S2AL is rearranged via a Mg-dependent methyl migration to produce 3-hydroxy-3-methyl-2-ketobutyrate (HMKB). In the reductase reaction, this 2-ketoacid undergoes a metal-dependent reduction by NADPH to yield (R)-2,3-dihydroxy-isovalerate. This Rhodococcus erythropolis (strain PR4 / NBRC 100887) protein is Ketol-acid reductoisomerase (NADP(+)).